The chain runs to 490 residues: Myocilin (490 aa).

The signal sequence occupies residues 1 to 18 (MPAVQLLLLAGLVWGAGA). A coiled-coil region spans residues 55-170 (SAIQDLQRDS…QEVARLARGQ (116 aa)). A disordered region spans residues 168-187 (RGQCPQARDTSQDVPAGSRE). Residues 230–489 (GCGELVWVGQ…MVTYDIKLSK (260 aa)) enclose the Olfactomedin-like domain. Cys-231 and Cys-419 form a disulfide bridge. The Ca(2+) site is built by Asp-366, Asn-414, Ala-415, Ile-463, and Asp-464. A Microbody targeting signal motif is present at residues 488-490 (SKI).

As to quaternary structure, homodimer (via N-terminus). Can also form higher oligomers. Interacts with OLFM3, FN1, NRCAM, GLDN and NFASC. Interacts (via N-terminus) with MYL2. Interacts with SFRP1, FRZB, FZD7, FZD10, FZD1 and WIF1; regulates Wnt signaling. Interacts with SNTA1; regulates muscle hypertrophy. Interacts with ERBB2 and ERBB3; activates ERBB2-ERBB3 signaling pathway. Interacts with SNCG; affects its secretion and its aggregation. Palmitoylated. In terms of processing, glycosylated. Post-translationally, undergoes a calcium-dependent proteolytic cleavage at Arg-212 by CAPN2 in the endoplasmic reticulum. The result is the production of two fragments, one of 35 kDa containing the C-terminal olfactomedin-like domain, and another of 20 kDa containing the N-terminal leucine zipper-like domain. Detected in eye aqueous humor (at protein level).

Its subcellular location is the secreted. The protein resides in the golgi apparatus. It is found in the cytoplasmic vesicle. The protein localises to the extracellular space. It localises to the extracellular matrix. Its subcellular location is the extracellular exosome. The protein resides in the mitochondrion. It is found in the mitochondrion intermembrane space. The protein localises to the mitochondrion inner membrane. It localises to the mitochondrion outer membrane. Its subcellular location is the rough endoplasmic reticulum. The protein resides in the cell projection. It is found in the cilium. The protein localises to the endoplasmic reticulum. Functionally, secreted glycoprotein regulating the activation of different signaling pathways in adjacent cells to control different processes including cell adhesion, cell-matrix adhesion, cytoskeleton organization and cell migration. Promotes substrate adhesion, spreading and formation of focal contacts. Negatively regulates cell-matrix adhesion and stress fiber assembly through Rho protein signal transduction. Modulates the organization of actin cytoskeleton by stimulating the formation of stress fibers through interactions with components of Wnt signaling pathways. Promotes cell migration through activation of PTK2 and the downstream phosphatidylinositol 3-kinase signaling. Plays a role in bone formation and promotes osteoblast differentiation in a dose-dependent manner through mitogen-activated protein kinase signaling. Mediates myelination in the peripheral nervous system through ERBB2/ERBB3 signaling. Plays a role as a regulator of muscle hypertrophy through the components of dystrophin-associated protein complex. Involved in positive regulation of mitochondrial depolarization. Plays a role in neurite outgrowth. May participate in the obstruction of fluid outflow in the trabecular meshwork. The protein is Myocilin of Oryctolagus cuniculus (Rabbit).